We begin with the raw amino-acid sequence, 233 residues long: Homeobox protein Hox-B6b (233 aa).

An Antp-type hexapeptide motif is present at residues 136 to 141; it reads IYPWMQ. Positions 155–214 form a DNA-binding region, homeobox; sequence GRRGRQTYTRYQTLELEKEFHFNRYLTRRRRIEISHALCLTERQIKIWFQNRRMKWKKEN. The interval 213–233 is disordered; that stretch reads ENKLLNPSKTPEEEEEAEKKS. The segment covering 224-233 has biased composition (acidic residues); that stretch reads EEEEEAEKKS.

Belongs to the Antp homeobox family.

It is found in the nucleus. Functionally, sequence-specific transcription factor which is part of a developmental regulatory system that provides cells with specific positional identities on the anterior-posterior axis. The chain is Homeobox protein Hox-B6b (hoxb6b) from Takifugu rubripes (Japanese pufferfish).